The sequence spans 454 residues: MSLLQFSGLFIVWLLATLFIGTLTWFEFRRVRFNFNVFFSLLFLLTFFFGFPLTSILVFRFNVAVVPAEVLLQALLSAGCFYAVYYVTYKTRLRTARAQAASSGGGLFTMNRVETHLAWMVMMAVALVSVGIFFMHNGFLLFRLHSYSQIFSSEVSGVALKRFFYFFIPAMLVVYFLRQSSRAWLFFLVSTVGFGLLTYMIVGGTRANIIIAFAIFLFIGIIRGWISPGMLAAAGVMGIVGMFWLALKRYGLNVSGDEAFYTFLYLTRDTFSPWENLALLLQHYGDIEFQGLAPIARDFYVFIPSWVWPDRPHIVLNTANYFTWEVLNNHSGLAISPTLLGSLVVMGGVWFIPPGAVVVGLIIKWFDWLYERGNHEPNRYKAAILHSFCFGAIFNMIVLAREGLDAFVSRVIFFMVVFGACLVVAKLIYWLLDSAGLIQPRRRRAAPLSPTETL.

Transmembrane regions (helical) follow at residues 6–26, 37–57, 63–83, 122–142, 157–177, 183–203, 209–229, 230–250, 343–363, 380–400, and 411–431; these read FSGLFIVWLLATLFIGTLTWF, VFFSLLFLLTFFFGFPLTSIL, VAVVPAEVLLQALLSAGCFYA, MMAVALVSVGIFFMHNGFLLF, GVALKRFFYFFIPAMLVVYFL, AWLFFLVSTVGFGLLTYMIVG, IIIAFAIFLFIGIIRGWISPG, MLAAAGVMGIVGMFWLALKRY, LVVMGGVWFIPPGAVVVGLII, YKAAILHSFCFGAIFNMIVLA, and VIFFMVVFGACLVVAKLIYWL.

This sequence belongs to the WzyE family. In terms of assembly, probably part of a complex composed of WzxE, WzyE and WzzE.

Its subcellular location is the cell inner membrane. It functions in the pathway bacterial outer membrane biogenesis; enterobacterial common antigen biosynthesis. Probably involved in the polymerization of enterobacterial common antigen (ECA) trisaccharide repeat units. In Cronobacter sakazakii (strain ATCC BAA-894) (Enterobacter sakazakii), this protein is Probable ECA polymerase.